The primary structure comprises 347 residues: F-box/LRR-repeat/kelch-repeat protein At2g27520 (347 aa).

The F-box domain maps to 1 to 50; the sequence is MVRLDLPWDLVDEILSRLPATSLGRLRFTCKRWNALFKDPEFITKQFHKA. LRR repeat units lie at residues 59-82, 152-177, 196-220, and 261-285; these read LSNFGVYSMSTNLKEIPNNIEIAQ, CKLVEIFELKSNSWRVLSKVHPNVEK, KFNILSFDFTTETFRSVPLPFLYQD, and LSWSKSFTLEFDSLRDLPVMSILRI. Residues 138–187 form a Kelch 1 repeat; sequence KSYDSYKILRITYGCKLVEIFELKSNSWRVLSKVHPNVEKHYYGGVSFKG. A Kelch 2 repeat occupies 306-347; sequence MIYIVGKNGFKKLSYEKDRSNLWRLPFFFSYVPSLVGLYPPM.

This is F-box/LRR-repeat/kelch-repeat protein At2g27520 from Arabidopsis thaliana (Mouse-ear cress).